Reading from the N-terminus, the 261-residue chain is tRNA U34 carboxymethyltransferase (261 aa).

Carboxy-S-adenosyl-L-methionine contacts are provided by residues Lys-25, Trp-39, Lys-44, Gly-63, 114 to 115 (VE), Tyr-135, and Arg-250.

This sequence belongs to the class I-like SAM-binding methyltransferase superfamily. CmoB family. Homotetramer.

The enzyme catalyses carboxy-S-adenosyl-L-methionine + 5-hydroxyuridine(34) in tRNA = 5-carboxymethoxyuridine(34) in tRNA + S-adenosyl-L-homocysteine + H(+). Functionally, catalyzes carboxymethyl transfer from carboxy-S-adenosyl-L-methionine (Cx-SAM) to 5-hydroxyuridine (ho5U) to form 5-carboxymethoxyuridine (cmo5U) at position 34 in tRNAs. This Helicobacter pylori (strain Shi470) protein is tRNA U34 carboxymethyltransferase.